Reading from the N-terminus, the 85-residue chain is Alpha-toxin Amm8 (85 aa).

The signal sequence occupies residues 1–19 (MNYLVMISLALLFMTGVES). One can recognise an LCN-type CS-alpha/beta domain in the interval 21–83 (KDGYIVNDIN…VRTKGPGRCN (63 aa)). Intrachain disulfides connect cysteine 31/cysteine 82, cysteine 35/cysteine 55, cysteine 41/cysteine 65, and cysteine 45/cysteine 67. A propeptide (removed by a carboxypeptidase) is located at residue arginine 85.

Belongs to the long (4 C-C) scorpion toxin superfamily. Sodium channel inhibitor family. Alpha subfamily. In terms of tissue distribution, expressed by the venom gland.

It is found in the secreted. Alpha toxins bind voltage-independently at site-3 of sodium channels (Nav) and inhibit the inactivation of the activated channels, thereby blocking neuronal transmission. The toxin principally slows the inactivation process of TTX-sensitive sodium channels. It discriminates neuronal versus muscular sodium channel, as it is more potent on rat brain Nav1.2/SCN2A (EC(50)=29 nM) than on rat skeletal muscle Nav1.4/SCN4A (EC(50)=416 nM). It also shows a weak activity on Nav1.7/SCN9A (EC(50)=1.76 uM). In vivo, the toxin produces pain hypersensibility to mechanical and thermal stimuli. It also exhibits potent analgesic activity (when injected intraperitoneally), increasing hot plate and tail flick withdrawal latencies in a dose-dependent fashion. This paradoxical analgesic action, is significantly suppressed by opioid receptor antagonists, suggesting a pain-induced analgesia mechanism that involves an endogenous opioid system. This led to hypothesis that pain relief induced by peripheral administration of Amm VIII may result from sensitization of primary afferent neurons and subsequent activation of an opioid-dependent noxious inhibitory control. This Androctonus mauritanicus mauritanicus (Scorpion) protein is Alpha-toxin Amm8.